The primary structure comprises 529 residues: Laccase-1 (529 aa).

The signal sequence occupies residues 1–23 (MFPGARILATLTLALHLLHGTHA). Plastocyanin-like domains are found at residues 25–159 (IGPT…FIVY), 170–312 (DVDN…ILRY), and 380–499 (TAPV…FAED). Asn57 carries N-linked (GlcNAc...) asparagine glycosylation. Cu cation is bound by residues His96, His98, His141, and His143. 2 disulfides stabilise this stretch: Cys117-Cys514 and Cys149-Cys236. 2 N-linked (GlcNAc...) asparagine glycosylation sites follow: Asn239 and Asn282. Residues His425, His428, His430, His481, Cys482, His483, and His487 each coordinate Cu cation.

It belongs to the multicopper oxidase family. Cu cation serves as cofactor.

The protein localises to the secreted. It catalyses the reaction 4 hydroquinone + O2 = 4 benzosemiquinone + 2 H2O. In terms of biological role, lignin degradation and detoxification of lignin-derived products. This Pleurotus ostreatus (Oyster mushroom) protein is Laccase-1 (POX1).